A 365-amino-acid chain; its full sequence is 3-dehydroquinate synthase (365 aa).

NAD(+)-binding positions include 75 to 80, 109 to 113, 133 to 134, lysine 146, and lysine 155; these read DAESGK, GAATD, and TT. 3 residues coordinate Zn(2+): glutamate 188, histidine 253, and histidine 269.

The protein belongs to the sugar phosphate cyclases superfamily. Dehydroquinate synthase family. Requires NAD(+) as cofactor. It depends on Co(2+) as a cofactor. Zn(2+) serves as cofactor.

The protein resides in the cytoplasm. The enzyme catalyses 7-phospho-2-dehydro-3-deoxy-D-arabino-heptonate = 3-dehydroquinate + phosphate. Its pathway is metabolic intermediate biosynthesis; chorismate biosynthesis; chorismate from D-erythrose 4-phosphate and phosphoenolpyruvate: step 2/7. Functionally, catalyzes the conversion of 3-deoxy-D-arabino-heptulosonate 7-phosphate (DAHP) to dehydroquinate (DHQ). In Corynebacterium efficiens (strain DSM 44549 / YS-314 / AJ 12310 / JCM 11189 / NBRC 100395), this protein is 3-dehydroquinate synthase.